The following is a 359-amino-acid chain: 5-amino-6-(D-ribitylamino)uracil--L-tyrosine 4-hydroxyphenyl transferase 1 (359 aa).

The region spanning 45–282 is the Radical SAM core domain; sequence VTYVVNANIN…VYAISRIFFK (238 aa). Residues Cys-59, Cys-63, and Cys-66 each coordinate [4Fe-4S] cluster.

It belongs to the radical SAM superfamily. CofH family. In terms of assembly, consists of two subunits, CofG and CofH. The cofactor is [4Fe-4S] cluster.

It catalyses the reaction 5-amino-6-(D-ribitylamino)uracil + L-tyrosine + S-adenosyl-L-methionine = 5-amino-5-(4-hydroxybenzyl)-6-(D-ribitylimino)-5,6-dihydrouracil + 2-iminoacetate + 5'-deoxyadenosine + L-methionine + H(+). Its pathway is cofactor biosynthesis; coenzyme F0 biosynthesis. Its function is as follows. Catalyzes the radical-mediated synthesis of 5-amino-5-(4-hydroxybenzyl)-6-(D-ribitylimino)-5,6-dihydrouracil from 5-amino-6-(D-ribitylamino)uracil and L-tyrosine. The sequence is that of 5-amino-6-(D-ribitylamino)uracil--L-tyrosine 4-hydroxyphenyl transferase 1 from Methanococcus maripaludis (strain DSM 14266 / JCM 13030 / NBRC 101832 / S2 / LL).